The sequence spans 440 residues: Fibulin-7 (440 aa).

A signal peptide spans 1–24; the sequence is MGPGSQRALFLLLLLLASPGARAF. Residues 28-73 are a coiled coil; it reads LNKQQLLTTIRQLQQLLKGQETRFTEGIRNMKSRLAALQNTVNKMT. The Sushi domain maps to 79-136; that stretch reads VSCPALEAPPDGKKFGSKYLVDHEVYFTCNPGFQLVGPSSVVCLANGSWTGEQPRCRD. Intrachain disulfides connect Cys81/Cys121, Cys107/Cys134, Cys140/Cys151, Cys145/Cys160, Cys162/Cys171, Cys229/Cys245, Cys241/Cys254, Cys256/Cys269, Cys275/Cys288, Cys282/Cys297, and Cys302/Cys319. A glycan (N-linked (GlcNAc...) asparagine) is linked at Asn124. Positions 136–172 constitute an EGF-like 1; calcium-binding domain; that stretch reads DISECSSQPCHNGGTCVEGINHYRCICPPGKTGNRCQ. In terms of domain architecture, EGF-like 2; calcium-binding spans 225 to 270; that stretch reads DVNECEIYGQKGRPRLCMHACVNTPGSYRCTCPSGYRILADGKSCE. Residues 271 to 320 form the EGF-like 3; calcium-binding domain; it reads DVDECAGPQHMCPRGTTCINTGGGFQCVNPECPEGSGNISYVKTSPFQCE. A glycan (N-linked (GlcNAc...) asparagine) is linked at Asn308.

This sequence belongs to the fibulin family. In terms of assembly, interacts with heparin, FBLN1, FN1 and DSPP. Preferentially binds dental mesenchyme cells and odontoblasts but not dental epithelial cells or nondental cells. Binding requires a heparan sulfate-containing receptor on the cell surface as well as an integrin. N-glycosylated. In terms of tissue distribution, highly expressed in newborn incisors and molars. A weaker expression is seen in the brain, kidneys, muscles and bones.

It localises to the secreted. It is found in the extracellular space. Its subcellular location is the extracellular matrix. Functionally, an adhesion molecule that interacts with extracellular matrix molecules in developing teeth and may play important roles in differentiation and maintenance of odontoblasts as well as in dentin formation. This Mus musculus (Mouse) protein is Fibulin-7 (Fbln7).